A 382-amino-acid chain; its full sequence is Small ribosomal subunit protein mS35 (382 aa).

Gly residues predominate over residues 363 to 375 (GRGGKALPGGKGG). Residues 363-382 (GRGGKALPGGKGGKMQRSKR) form a disordered region.

The protein belongs to the mitochondrion-specific ribosomal protein mS35 family. As to quaternary structure, component of the mitochondrial small ribosomal subunit (mt-SSU). Mature N.crassa 74S mitochondrial ribosomes consist of a small (37S) and a large (54S) subunit. The 37S small subunit contains a 16S ribosomal RNA (16S mt-rRNA) and 32 different proteins. The 54S large subunit contains a 23S rRNA (23S mt-rRNA) and 42 different proteins.

It is found in the mitochondrion. In terms of biological role, component of the mitochondrial ribosome (mitoribosome), a dedicated translation machinery responsible for the synthesis of mitochondrial genome-encoded proteins, including at least some of the essential transmembrane subunits of the mitochondrial respiratory chain. The mitoribosomes are attached to the mitochondrial inner membrane and translation products are cotranslationally integrated into the membrane. The chain is Small ribosomal subunit protein mS35 (rsm24) from Neurospora crassa (strain ATCC 24698 / 74-OR23-1A / CBS 708.71 / DSM 1257 / FGSC 987).